Reading from the N-terminus, the 306-residue chain is UDP-3-O-acyl-N-acetylglucosamine deacetylase (306 aa).

H79, H238, and D242 together coordinate Zn(2+). H265 serves as the catalytic Proton donor.

The protein belongs to the LpxC family. Zn(2+) is required as a cofactor.

It carries out the reaction a UDP-3-O-[(3R)-3-hydroxyacyl]-N-acetyl-alpha-D-glucosamine + H2O = a UDP-3-O-[(3R)-3-hydroxyacyl]-alpha-D-glucosamine + acetate. It functions in the pathway glycolipid biosynthesis; lipid IV(A) biosynthesis; lipid IV(A) from (3R)-3-hydroxytetradecanoyl-[acyl-carrier-protein] and UDP-N-acetyl-alpha-D-glucosamine: step 2/6. Functionally, catalyzes the hydrolysis of UDP-3-O-myristoyl-N-acetylglucosamine to form UDP-3-O-myristoylglucosamine and acetate, the committed step in lipid A biosynthesis. In Shewanella violacea (strain JCM 10179 / CIP 106290 / LMG 19151 / DSS12), this protein is UDP-3-O-acyl-N-acetylglucosamine deacetylase.